A 220-amino-acid polypeptide reads, in one-letter code: UPF0319 protein YccT (220 aa).

Residues 1–20 (MKTGIVTTLIALCLPVSVFA) form the signal peptide.

It belongs to the UPF0319 family.

This chain is UPF0319 protein YccT, found in Escherichia coli O139:H28 (strain E24377A / ETEC).